The sequence spans 690 residues: Elongation factor G (690 aa).

Residues 8-283 enclose the tr-type G domain; that stretch reads EDYRNFGIMA…AVVDYLPSPV (276 aa). GTP is bound by residues 17–24, 81–85, and 135–138; these read AHIDAGKT, DTPGH, and NKMD.

Belongs to the TRAFAC class translation factor GTPase superfamily. Classic translation factor GTPase family. EF-G/EF-2 subfamily.

The protein localises to the cytoplasm. In terms of biological role, catalyzes the GTP-dependent ribosomal translocation step during translation elongation. During this step, the ribosome changes from the pre-translocational (PRE) to the post-translocational (POST) state as the newly formed A-site-bound peptidyl-tRNA and P-site-bound deacylated tRNA move to the P and E sites, respectively. Catalyzes the coordinated movement of the two tRNA molecules, the mRNA and conformational changes in the ribosome. The polypeptide is Elongation factor G (Rhodopseudomonas palustris (strain HaA2)).